The chain runs to 123 residues: uncharacterized protein (123 aa).

Positions 1–25 (MKHGIKALLITLSLACAGMSHSALA) are cleaved as a signal peptide. Low complexity predominate over residues 40-53 (EAPAAQSKAAVPAK). The interval 40-62 (EAPAAQSKAAVPAKASDEEGTRV) is disordered. 2 HhH domains span residues 60–90 (TRVS…IVSY) and 91–120 (REEY…NLAV).

This is an uncharacterized protein from Escherichia coli (strain K12).